The sequence spans 247 residues: Aspartate/glutamate leucyltransferase (247 aa).

Belongs to the R-transferase family. Bpt subfamily.

It is found in the cytoplasm. It carries out the reaction N-terminal L-glutamyl-[protein] + L-leucyl-tRNA(Leu) = N-terminal L-leucyl-L-glutamyl-[protein] + tRNA(Leu) + H(+). The enzyme catalyses N-terminal L-aspartyl-[protein] + L-leucyl-tRNA(Leu) = N-terminal L-leucyl-L-aspartyl-[protein] + tRNA(Leu) + H(+). Its function is as follows. Functions in the N-end rule pathway of protein degradation where it conjugates Leu from its aminoacyl-tRNA to the N-termini of proteins containing an N-terminal aspartate or glutamate. The chain is Aspartate/glutamate leucyltransferase from Chromohalobacter salexigens (strain ATCC BAA-138 / DSM 3043 / CIP 106854 / NCIMB 13768 / 1H11).